A 426-amino-acid polypeptide reads, in one-letter code: Limonoid 21-O-acetyltransferse (426 aa).

Catalysis depends on proton acceptor residues H152 and D365.

This sequence belongs to the plant acyltransferase family. As to quaternary structure, monomer. In terms of tissue distribution, expressed in maturing fruits and in juice vesicles.

It catalyses the reaction isomeliandiol + acetyl-CoA = 21-O-acetyl-isomeliandiol + CoA. It participates in secondary metabolite biosynthesis; terpenoid biosynthesis. Functionally, acetyltransferase involved in the biosynthesis of limonoids triterpene natural products such as limonin, a compound with insecticidal activity responsible for the bitter taste in citrus. Catalyzes the formation of 21-O-acetyl-isomeliandiol from isomeliandiol. This chain is Limonoid 21-O-acetyltransferse, found in Citrus sinensis (Sweet orange).